The sequence spans 747 residues: Putative T-box protein 31 (747 aa).

Residues 33–199 constitute a DNA-binding region (T-box); sequence QMLTKRKKTN…AGPAAKKTPD (167 aa). Disordered stretches follow at residues 268–289 and 332–364; these read SLSSPAALKHDSTVSSDSDFDD and SINNPGYLSTASSPAALNQDSSASEKSSIVRDK. Residues 332–358 are compositionally biased toward polar residues; it reads SINNPGYLSTASSPAALNQDSSASEKS.

It is found in the nucleus. The chain is Putative T-box protein 31 (tbx-31) from Caenorhabditis elegans.